We begin with the raw amino-acid sequence, 822 residues long: AP-1 complex subunit gamma-1 (822 aa).

A disordered region spans residues 597-628 (EIVQTNGETEPAPLETKPPPSGPQPTSQANDL). Residues 702 to 817 (AGIPSITAYS…QDLAEVNNFP (116 aa)) form the GAE domain.

Belongs to the adaptor complexes large subunit family. As to quaternary structure, adaptor protein complex 1 (AP-1) is a heterotetramer composed of two large adaptins (gamma-type subunit AP1G1 and beta-type subunit AP1B1), a medium adaptin (mu-type subunit AP1M1 or AP1M2) and a small adaptin (sigma-type subunit AP1S1 or AP1S2 or AP1S3). Interacts (via GAE domain) with RABEP1. Interacts with EPS15. Interacts with SYNRG/gamma-synergin. Interacts (via GAE domain) with AP1AR (via coiled-coil domain). Interacts with CLN3 (via dileucine motif); this interaction facilitates lysosomal targeting. Interacts (via GAE domain) with AFTPH/aftiphilin; the interaction is required to recruit AFTPH/aftiphilin to the perinuclear region of the cell.

It is found in the golgi apparatus. Its subcellular location is the cytoplasmic vesicle. It localises to the clathrin-coated vesicle membrane. The protein localises to the cytoplasm. The protein resides in the perinuclear region. It is found in the clathrin-coated vesicle. Its subcellular location is the membrane. It localises to the clathrin-coated pit. Subunit of clathrin-associated adaptor protein complex 1 that plays a role in protein sorting in the late-Golgi/trans-Golgi network (TGN) and/or endosomes. The AP complexes mediate both the recruitment of clathrin to membranes and the recognition of sorting signals within the cytosolic tails of transmembrane cargo molecules. In association with AFTPH/aftiphilin in the aftiphilin/p200/gamma-synergin complex, involved in the trafficking of transferrin from early to recycling endosomes, and the membrane trafficking of furin and the lysosomal enzyme cathepsin D between the trans-Golgi network (TGN) and endosomes. The sequence is that of AP-1 complex subunit gamma-1 (AP1G1) from Pongo abelii (Sumatran orangutan).